The chain runs to 339 residues: Lymphocyte-specific protein 1 (339 aa).

Positions 1-198 (MAEASSDPGA…SPPLSPTTKL (198 aa)) are disordered. Serine 24 carries the phosphoserine modification. Composition is skewed to basic and acidic residues over residues 32-43 (VHEQCQHERDRQ) and 51-61 (GGGHVPERPKQ). Serine 111 bears the Phosphoserine mark. A compositionally biased stretch (basic and acidic residues) spans 117 to 140 (EDRPGLHAYEKEDSDEVHLEELSL). Threonine 175 is modified (phosphothreonine). A phosphoserine mark is found at serine 177, serine 188, serine 189, and serine 193. Positions 185–196 (IEQSSPPLSPTT) are enriched in polar residues. Position 252 is a phosphoserine; by MAPKAPK2 (serine 252). Residues 294–315 (KSLWEQKGGSKTSSTIKSTPSG) are disordered. Residues 300 to 315 (KGGSKTSSTIKSTPSG) are compositionally biased toward low complexity. Lysine 327 is modified (N6-acetyllysine).

Binds actin. In terms of processing, phosphorylated by casein kinase II, protein kinase C and MAPKAPK2. Phosphorylation by PKC induces translocation from membrane to cytoplasm. Phosphorylation by MAPKAPK2 may regulate neutrophil chemotaxis. As to expression, activated T-lymphocytes.

The protein localises to the cell membrane. Functionally, may play a role in mediating neutrophil activation and chemotaxis. This chain is Lymphocyte-specific protein 1 (LSP1), found in Homo sapiens (Human).